The primary structure comprises 352 residues: Quinolinate synthase (352 aa).

2 residues coordinate iminosuccinate: His48 and Ser69. Residue Cys114 coordinates [4Fe-4S] cluster. Residues 140–142 (YAN) and Ser157 each bind iminosuccinate. Position 201 (Cys201) interacts with [4Fe-4S] cluster. Iminosuccinate is bound by residues 227–229 (HPE) and Thr244. Cys298 is a [4Fe-4S] cluster binding site.

It belongs to the quinolinate synthase family. Type 1 subfamily. It depends on [4Fe-4S] cluster as a cofactor.

The protein localises to the cytoplasm. It catalyses the reaction iminosuccinate + dihydroxyacetone phosphate = quinolinate + phosphate + 2 H2O + H(+). The protein operates within cofactor biosynthesis; NAD(+) biosynthesis; quinolinate from iminoaspartate: step 1/1. Functionally, catalyzes the condensation of iminoaspartate with dihydroxyacetone phosphate to form quinolinate. In Pseudomonas syringae pv. syringae (strain B728a), this protein is Quinolinate synthase.